The chain runs to 1260 residues: Phosphatidylinositol 3,4,5-trisphosphate 5-phosphatase 2 (1260 aa).

Positions 25–121 (WYHRDLSRAA…GLVCALLLPV (97 aa)) constitute an SH2 domain. The span at 126 to 136 (ELDPPDERDAS) shows a compositional bias: basic and acidic residues. The disordered stretch occupies residues 126–178 (ELDPPDERDASDGEDEKPPLPPRSGTSVSAPLGPSSPPAAPEPPTPAVESAPN). Position 136 is a phosphoserine (Ser136). Residues 159–171 (PSSPPAAPEPPTP) are compositionally biased toward pro residues. A phosphoserine mark is found at Ser243 and Ser355. Tyr888 carries the phosphotyrosine modification. Ser892 carries the phosphoserine modification. The tract at residues 899-1120 (GAKSKAPSVS…FLGEAAGGDD (222 aa)) is disordered. A compositionally biased stretch (pro residues) spans 940 to 952 (PPPTGRPPAPPRA). The SH3-binding motif lies at 946–951 (PPAPPR). The span at 953–967 (APREEPLTPRLKPEG) shows a compositional bias: basic and acidic residues. Phosphothreonine is present on Thr960. An NPXY motif motif is present at residues 985 to 988 (NPAY). Tyr988 is modified (phosphotyrosine). Composition is skewed to pro residues over residues 998-1013 (LLPP…PVPP), 1050-1061 (LPPPDFPPPPLP), and 1090-1108 (LPPP…PLPP). The residue at position 1133 (Ser1133) is a Phosphoserine. A Phosphotyrosine modification is found at Tyr1164. Residues 1181 to 1200 (EDLAEEAPCPQAGRTGGLGE) form a disordered region. The SAM domain maps to 1198 to 1260 (LGEAGMGAWL…LLLDTLQLSK (63 aa)). Ser1259 carries the post-translational modification Phosphoserine.

This sequence belongs to the inositol 1,4,5-trisphosphate 5-phosphatase family. As to quaternary structure, interacts with tyrosine phosphorylated form of SHC1. Interacts with EGFR. Upon stimulation by the EGF signaling pathway, it forms a complex with SHC1 and EGFR. Interacts with cytoskeletal protein SORBS3/vinexin, promoting its localization to the periphery of cells. Forms a complex with filamin (FLNA or FLNB), actin, GPIb (GP1BA or GP1BB) that regulates cortical and submembraneous actin. Interacts with c-Met/MET, when c-Met/MET is phosphorylated on 'Tyr-1356'. Interacts with p130Cas/BCAR1. Interacts with CENTD3/ARAP3 via its SAM domain. Interacts with c-Cbl/CBL and CAP/SORBS1. Interacts with activated EPHA2 receptor. Interacts with receptor FCGR2A. Interacts with receptor FCGR2B. Interacts with tyrosine kinase ABL1. Interacts with tyrosine kinase TEC. Interacts with CSF1R. Interacts (via N-terminus) with SH3YL1 (via SH3 domain). Interacts with FCRL6 (tyrosine phosphorylated form). Interacts (via SH2 domain) with tyrosine phosphorylated KLRC1 (via ITIM). Interacts with NEDD9/HEF1. Post-translationally, tyrosine phosphorylated by the members of the SRC family after exposure to a diverse array of extracellular stimuli such as insulin, growth factors such as EGF or PDGF, chemokines, integrin ligands and hypertonic and oxidative stress. May be phosphorylated upon IgG receptor FCGR2B-binding. Phosphorylated at Tyr-988 following cell attachment and spreading. Phosphorylated at Tyr-1164 following EGF signaling pathway stimulation. Expressed abundantly in skeletal muscle tissue.

Its subcellular location is the cytoplasm. It localises to the cytosol. The protein localises to the cytoskeleton. The protein resides in the membrane. It is found in the cell projection. Its subcellular location is the filopodium. It localises to the lamellipodium. The protein localises to the basal cell membrane. The protein resides in the nucleus. It is found in the nucleus speckle. Its subcellular location is the spindle pole. It carries out the reaction a 1,2-diacyl-sn-glycero-3-phospho-(1D-myo-inositol-3,4,5-trisphosphate) + H2O = a 1,2-diacyl-sn-glycero-3-phospho-(1D-myo-inositol-3,4-bisphosphate) + phosphate. The catalysed reaction is 1,2-dioctanoyl-sn-glycero-3-phospho-(1D-myo-inositol-3,4,5-trisphosphate) + H2O = 1,2-dioctanoyl-sn-glycero-3-phospho-(1D-myo-inositol-3,4-bisphosphate) + phosphate. It catalyses the reaction 1,2-dihexadecanoyl-sn-glycero-3-phospho-(1D-myo-inositol-3,4,5-trisphosphate) + H2O = 1,2-dihexadecanoyl-sn-glycero-3-phospho-(1D-myo-inositol-3,4-bisphosphate) + phosphate. Activated upon translocation to the sites of synthesis of PtdIns(3,4,5)P3 in the membrane. Enzymatic activity is enhanced in the presence of phosphatidylserine. Its function is as follows. Phosphatidylinositol (PtdIns) phosphatase that specifically hydrolyzes the 5-phosphate of phosphatidylinositol-3,4,5-trisphosphate (PtdIns(3,4,5)P3) to produce PtdIns(3,4)P2, thereby negatively regulating the PI3K (phosphoinositide 3-kinase) pathways. Required for correct mitotic spindle orientation and therefore progression of mitosis. Plays a central role in regulation of PI3K-dependent insulin signaling, although the precise molecular mechanisms and signaling pathways remain unclear. While overexpression reduces both insulin-stimulated MAP kinase and Akt activation, its absence does not affect insulin signaling or GLUT4 trafficking. Confers resistance to dietary obesity. May act by regulating AKT2, but not AKT1, phosphorylation at the plasma membrane. Part of a signaling pathway that regulates actin cytoskeleton remodeling. Required for the maintenance and dynamic remodeling of actin structures as well as in endocytosis, having a major impact on ligand-induced EGFR internalization and degradation. Participates in regulation of cortical and submembraneous actin by hydrolyzing PtdIns(3,4,5)P3 thereby regulating membrane ruffling. Regulates cell adhesion and cell spreading. Required for HGF-mediated lamellipodium formation, cell scattering and spreading. Acts as a negative regulator of EPHA2 receptor endocytosis by inhibiting via PI3K-dependent Rac1 activation. Acts as a regulator of neuritogenesis by regulating PtdIns(3,4,5)P3 level and is required to form an initial protrusive pattern, and later, maintain proper neurite outgrowth. Acts as a negative regulator of the FC-gamma-RIIA receptor (FCGR2A). Mediates signaling from the FC-gamma-RIIB receptor (FCGR2B), playing a central role in terminating signal transduction from activating immune/hematopoietic cell receptor systems. Involved in EGF signaling pathway. Upon stimulation by EGF, it is recruited by EGFR and dephosphorylates PtdIns(3,4,5)P3. Plays a negative role in regulating the PI3K-PKB pathway, possibly by inhibiting PKB activity. Down-regulates Fc-gamma-R-mediated phagocytosis in macrophages independently of INPP5D/SHIP1. In macrophages, down-regulates NF-kappa-B-dependent gene transcription by regulating macrophage colony-stimulating factor (M-CSF)-induced signaling. Plays a role in the localization of AURKA and NEDD9/HEF1 to the basolateral membrane at interphase in polarized cysts, thereby mediates cell cycle homeostasis, cell polarization and cilia assembly. Additionally promotion of cilia growth is also facilitated by hydrolysis of (PtdIns(3,4,5)P3) to PtdIns(3,4)P2. Promotes formation of apical membrane-initiation sites during the initial stages of lumen formation via Rho family-induced actin filament organization and CTNNB1 localization to cell-cell contacts. May also hydrolyze PtdIns(1,3,4,5)P4, and could thus affect the levels of the higher inositol polyphosphates like InsP6. Involved in endochondral ossification. The protein is Phosphatidylinositol 3,4,5-trisphosphate 5-phosphatase 2 of Sus scrofa (Pig).